Here is a 61-residue protein sequence, read N- to C-terminus: Small ribosomal subunit protein uS14 (61 aa).

Residues Cys-24, Cys-27, Cys-40, and Cys-43 each coordinate Zn(2+).

The protein belongs to the universal ribosomal protein uS14 family. Zinc-binding uS14 subfamily. Part of the 30S ribosomal subunit. Contacts proteins S3 and S10. It depends on Zn(2+) as a cofactor.

Binds 16S rRNA, required for the assembly of 30S particles and may also be responsible for determining the conformation of the 16S rRNA at the A site. The protein is Small ribosomal subunit protein uS14 of Staphylococcus carnosus (strain TM300).